The following is a 1111-amino-acid chain: Receptor-type guanylate cyclase gcy-14 (1111 aa).

The signal sequence occupies residues 1–14; the sequence is MCLFLLLFPYLASG. Residues 15–473 are Extracellular-facing; the sequence is QFLQTVKVGL…ECPPDFVKEY (459 aa). N-linked (GlcNAc...) asparagine glycans are attached at residues Asn-65, Asn-130, Asn-318, Asn-340, Asn-365, and Asn-379. The chain crosses the membrane as a helical span at residues 474 to 494; the sequence is LVYTIIAAVIVVLALLAGCAG. The region spanning 482-817 is the Protein kinase domain; sequence VIVVLALLAG…KSNLMDHVFN (336 aa). ATP contacts are provided by residues 488 to 496 and Lys-545; that span reads LLAGCAGLL. The Cytoplasmic portion of the chain corresponds to 495–1111; it reads LLYTMQMKRK…DFNNGNECVS (617 aa). The region spanning 875–1005 is the Guanylate cyclase domain; the sequence is TIFFSDVVQF…DAVNTASRME (131 aa). A disordered region spans residues 1061 to 1082; it reads SAQAPREKTPEPPRRQSVRSIS. Positions 1065 to 1074 are enriched in basic and acidic residues; it reads PREKTPEPPR.

It belongs to the adenylyl cyclase class-4/guanylyl cyclase family. In terms of assembly, homodimer. Expressed asymmetrically in ASEL sensory neuron.

It localises to the cell membrane. The protein localises to the cell projection. The protein resides in the cilium. The catalysed reaction is GTP = 3',5'-cyclic GMP + diphosphate. Functionally, guanylate cyclase involved in the production of the second messenger cGMP. Regulates chemotaxis responses toward Na(1+) and Li(1+) salt ions and alkaline pH in ASE left (ASEL) sensory neuron. Directly senses environmental alkalinity in ASEL neuron which probably leads to the activation of cGMP-gated cation channel tax2/tax4. The protein is Receptor-type guanylate cyclase gcy-14 of Caenorhabditis elegans.